The sequence spans 166 residues: Large ribosomal subunit protein eL14 (166 aa).

Positions K135–K166 are disordered. Basic and acidic residues predominate over residues D146–K157.

This sequence belongs to the eukaryotic ribosomal protein eL14 family.

The chain is Large ribosomal subunit protein eL14 (RpL14) from Drosophila melanogaster (Fruit fly).